Consider the following 197-residue polypeptide: Ribosomal RNA large subunit methyltransferase E (197 aa).

Residues Gly-50, Trp-52, Asp-67, Asp-83, and Asp-111 each contribute to the S-adenosyl-L-methionine site. Lys-151 acts as the Proton acceptor in catalysis.

This sequence belongs to the class I-like SAM-binding methyltransferase superfamily. RNA methyltransferase RlmE family.

The protein localises to the cytoplasm. It carries out the reaction uridine(2552) in 23S rRNA + S-adenosyl-L-methionine = 2'-O-methyluridine(2552) in 23S rRNA + S-adenosyl-L-homocysteine + H(+). Specifically methylates the uridine in position 2552 of 23S rRNA at the 2'-O position of the ribose in the fully assembled 50S ribosomal subunit. The sequence is that of Ribosomal RNA large subunit methyltransferase E from Thermoplasma volcanium (strain ATCC 51530 / DSM 4299 / JCM 9571 / NBRC 15438 / GSS1).